The primary structure comprises 315 residues: Protein sprouty homolog 2 (315 aa).

Residues 1 to 15 (MEARAQSGNGSQPLL) show a composition bias toward polar residues. The disordered stretch occupies residues 1–140 (MEARAQSGNG…SEQRLLGSSF (140 aa)). A compositionally biased stretch (basic and acidic residues) spans 20–32 (DGGRPRGEPDPRD). A compositionally biased stretch (low complexity) spans 108–140 (SRSISTVSSGSRSSTRTSTSSSSSEQRLLGSSF). The interval 118-315 (SRSSTRTSTS…VPRRNFEKPT (198 aa)) is required for interaction with CAV1. An SPR domain is found at 177 to 291 (RCEDCGKCKC…CYDRVNRPGC (115 aa)). A required for interaction with TESK1 region spans residues 178–315 (CEDCGKCKCK…VPRRNFEKPT (138 aa)).

This sequence belongs to the sprouty family. In terms of assembly, forms heterodimers with SPRY1. Forms a tripartite complex containing GAB1, METTL13 and SPRY2. Within the complex interacts with METTL13. Interacts with RAF1. Interacts (via C-terminus) with TESK1 (via C-terminus); the interaction disrupts SPRY2 interaction with GRB2, potentially via disruption of SPRY2 serine dephosphorylation. Interacts with PPP2R1A/PP2A-A and PPP2CA/PP2A-C; the interaction with PPP2CA/PP2A-C is inhibited by interaction with TESK1, possibly by vesicular sequestration of SPRY2. Inhibition of the interaction with the serine/threonine-protein phosphatase 2A (PP2A) holoenzyme results in loss of PP2A-mediated dephosphorylation, resulting in the loss of SPRY2 interaction with GRB2. Interacts with GRB2. Interacts with CBL/C-CBL; the interaction inhibits CBL-mediated ubiquitination of EGFR. Interacts (via C-terminus) with CAV1 (via C-terminus). Cleaved at Pro-144 by the prolyl endopeptidase FAP (seprase) activity (in vitro).

The protein resides in the cytoplasm. Its subcellular location is the cytoskeleton. It is found in the cell projection. It localises to the ruffle membrane. In terms of biological role, antagonist of fibroblast growth factor (FGF) pathways via inhibition of FGF-mediated phosphorylation of ERK1/2. Thereby acts as an antagonist of FGF-induced retinal lens fiber differentiation, may inhibit limb bud outgrowth and may negatively modulate respiratory organogenesis. Inhibits TGFB-induced epithelial-to-mesenchymal transition in retinal lens epithelial cells. Inhibits CBL/C-CBL-mediated EGFR ubiquitination. The polypeptide is Protein sprouty homolog 2 (SPRY2) (Pongo abelii (Sumatran orangutan)).